Consider the following 349-residue polypeptide: Protein-glutamate methylesterase/protein-glutamine glutaminase (349 aa).

A Response regulatory domain is found at 5–122; the sequence is RVLSVDDSAL…REGMLAYSEM (118 aa). 4-aspartylphosphate is present on Asp56. Residues 152-344 form the CheB-type methylesterase domain; the sequence is LLSSEKLIAI…QQMLAKISAG (193 aa). Catalysis depends on residues Ser164, His190, and Asp286.

Belongs to the CheB family. In terms of processing, phosphorylated by CheA. Phosphorylation of the N-terminal regulatory domain activates the methylesterase activity.

The protein localises to the cytoplasm. It catalyses the reaction [protein]-L-glutamate 5-O-methyl ester + H2O = L-glutamyl-[protein] + methanol + H(+). The enzyme catalyses L-glutaminyl-[protein] + H2O = L-glutamyl-[protein] + NH4(+). In terms of biological role, involved in chemotaxis. Part of a chemotaxis signal transduction system that modulates chemotaxis in response to various stimuli. Catalyzes the demethylation of specific methylglutamate residues introduced into the chemoreceptors (methyl-accepting chemotaxis proteins or MCP) by CheR. Also mediates the irreversible deamidation of specific glutamine residues to glutamic acid. In Escherichia coli O6:K15:H31 (strain 536 / UPEC), this protein is Protein-glutamate methylesterase/protein-glutamine glutaminase.